The following is a 148-amino-acid chain: Small ribosomal subunit protein uS15 (148 aa).

The disordered stretch occupies residues 1 to 23; sequence MRKSKEKGRSGSTRPPQLKKPEW.

The protein belongs to the universal ribosomal protein uS15 family. Part of the 30S ribosomal subunit.

The protein is Small ribosomal subunit protein uS15 of Thermofilum pendens (strain DSM 2475 / Hrk 5).